We begin with the raw amino-acid sequence, 323 residues long: UDP-N-acetylenolpyruvoylglucosamine reductase (323 aa).

The 166-residue stretch at 52-217 (KSGGAADWLF…VSARLQGEPG (166 aa)) folds into the FAD-binding PCMH-type domain. The active site involves arginine 197. A disordered region spans residues 234 to 253 (EQSQPVRTKTGGSTFKNPPG). The span at 235 to 249 (QSQPVRTKTGGSTFK) shows a compositional bias: polar residues. Catalysis depends on serine 246, which acts as the Proton donor. The active site involves glutamate 316.

This sequence belongs to the MurB family. FAD serves as cofactor.

It is found in the cytoplasm. The catalysed reaction is UDP-N-acetyl-alpha-D-muramate + NADP(+) = UDP-N-acetyl-3-O-(1-carboxyvinyl)-alpha-D-glucosamine + NADPH + H(+). It functions in the pathway cell wall biogenesis; peptidoglycan biosynthesis. Cell wall formation. This Erythrobacter litoralis (strain HTCC2594) protein is UDP-N-acetylenolpyruvoylglucosamine reductase.